The following is a 394-amino-acid chain: Protein arginine N-methyltransferase 8 (394 aa).

Residue Gly-2 is the site of N-myristoyl glycine attachment. Residues 21–40 (VESTEVSSAPPQPPQPVIPA) form a disordered region. Short sequence motifs (SH3-binding) lie at residues 29 to 42 (APPQPPQPVIPAKP) and 53 to 58 (PSCPGR). Positions 30-39 (PPQPPQPVIP) are enriched in pro residues. Arg-58 carries the post-translational modification Omega-N-methylarginine; by PRMT8. Asymmetric dimethylarginine; by PRMT8 is present on Arg-73. Residues 73–394 (RDYYFDSYAH…TSVSNDYKMR (322 aa)) enclose the SAM-dependent MTase PRMT-type domain. S-adenosyl-L-methionine contacts are provided by residues His-86, Arg-95, Gly-119, 119–122 (GSGT), Glu-141, and Glu-170. Active-site residues include Glu-185 and Glu-194.

Belongs to the class I-like SAM-binding methyltransferase superfamily. Protein arginine N-methyltransferase family. PRMT8 subfamily. As to quaternary structure, homodimer. Tetramer; individual homodimers associates to form a homotetramer. Homooctamer; individual homodimers associates to form a homooctamer and homooligomerization is required for proper localization to the cell membrane. Heterodimer with PRMT1; heterodimerization may recruit PRMT1 activity to the plasma membrane. Interacts with PRMT2 (via the SH3 domain). Interacts with FYN (via the SH3 domain). Interacts with EWS; independently of EWS methylation status. Brain-specific. Only expressed in neurons, especially in the somatosensory and limbic systems, and a part of motor system. Highly expressed in all of the regions related to general somatosensory system. Expressed in most of the relay nuclei intervening the special somatosensory system, such as the auditory, visual and vestibular systems. Also present in forebrain limbic areas and thalamic nuclei relevant to limbic areas and in areas related to the motor system, such as the caudate putamen, Purkinje cells, inferior olivary nucleus and cerebellar nuclei.

The protein resides in the cell membrane. The enzyme catalyses L-arginyl-[protein] + S-adenosyl-L-methionine = N(omega)-methyl-L-arginyl-[protein] + S-adenosyl-L-homocysteine + H(+). It carries out the reaction L-arginyl-[protein] + 2 S-adenosyl-L-methionine = N(omega),N(omega)-dimethyl-L-arginyl-[protein] + 2 S-adenosyl-L-homocysteine + 2 H(+). Functionally, S-adenosyl-L-methionine-dependent and membrane-associated arginine methyltransferase that can both catalyze the formation of omega-N monomethylarginine (MMA) and asymmetrical dimethylarginine (aDMA) in proteins such as NIFK, myelin basic protein, histone H4, H2A and H2A/H2B dimer. Able to mono- and dimethylate EWS protein; however its precise role toward EWS remains unclear as it still interacts with fully methylated EWS. The chain is Protein arginine N-methyltransferase 8 from Mus musculus (Mouse).